A 290-amino-acid chain; its full sequence is PIH1 domain-containing protein 1 (290 aa).

S12, S16, and S173 each carry phosphoserine.

This sequence belongs to the PIH1 family. Component of the R2TP complex composed at least of RUVBL1, RUVBL2, RPAP3 and PIHD1. Component of the PAQosome complex which is responsible for the biogenesis of several protein complexes and which consists of R2TP complex members RUVBL1, RUVBL2, RPAP3 and PIH1D1, URI complex members PFDN2, PFDN6, PDRG1, UXT and URI1 as well as ASDURF, POLR2E and DNAAF10/WDR92. Interacts with phosphorylated TELO2. Mediates interaction of TELO2 with the R2TP complex. Interacts with phosphorylated ECD, EFTUD2/SNRP116, RPB1 and UBR5 and with RPB1 in a phosphorylation-independent manner. Interacts with the core C/D box snoRNP particle components NOP58 and FBL and with RUVBL1/TIP49. Interacts with RPAP3 and DNAAF10. Interacts with histone H4 and with SWI/SNF complex member SMARCB1/SNF5. Interacts with the mTORC1 complex member RPTOR. Interacts with isoform 1 of MSL1.

The protein resides in the nucleus. Its function is as follows. Involved in the assembly of C/D box small nucleolar ribonucleoprotein (snoRNP) particles. Recruits the SWI/SNF complex to the core promoter of rRNA genes and enhances pre-rRNA transcription. Mediates interaction of TELO2 with the R2TP complex which is necessary for the stability of MTOR and SMG1. Positively regulates the assembly and activity of the mTORC1 complex. The sequence is that of PIH1 domain-containing protein 1 (Pih1d1) from Mus musculus (Mouse).